The sequence spans 513 residues: Light-independent protochlorophyllide reductase subunit B (513 aa).

Aspartate 36 is a binding site for [4Fe-4S] cluster. Aspartate 299 functions as the Proton donor in the catalytic mechanism. 434–435 contributes to the substrate binding site; sequence GM.

The protein belongs to the ChlB/BchB/BchZ family. Protochlorophyllide reductase is composed of three subunits; ChlL, ChlN and ChlB. Forms a heterotetramer of two ChlB and two ChlN subunits. [4Fe-4S] cluster serves as cofactor.

The protein resides in the plastid. It is found in the chloroplast. The catalysed reaction is chlorophyllide a + oxidized 2[4Fe-4S]-[ferredoxin] + 2 ADP + 2 phosphate = protochlorophyllide a + reduced 2[4Fe-4S]-[ferredoxin] + 2 ATP + 2 H2O. Its pathway is porphyrin-containing compound metabolism; chlorophyll biosynthesis (light-independent). Component of the dark-operative protochlorophyllide reductase (DPOR) that uses Mg-ATP and reduced ferredoxin to reduce ring D of protochlorophyllide (Pchlide) to form chlorophyllide a (Chlide). This reaction is light-independent. The NB-protein (ChlN-ChlB) is the catalytic component of the complex. In Cycas taitungensis (Prince sago), this protein is Light-independent protochlorophyllide reductase subunit B.